We begin with the raw amino-acid sequence, 176 residues long: SsrA-binding protein (176 aa).

The tract at residues 1–33 (MTEAGAKKAAGKKSGKGKGKNAKKNQPNITPVA) is disordered. The segment covering 9-23 (AAGKKSGKGKGKNAK) has biased composition (basic residues).

The protein belongs to the SmpB family.

It localises to the cytoplasm. In terms of biological role, required for rescue of stalled ribosomes mediated by trans-translation. Binds to transfer-messenger RNA (tmRNA), required for stable association of tmRNA with ribosomes. tmRNA and SmpB together mimic tRNA shape, replacing the anticodon stem-loop with SmpB. tmRNA is encoded by the ssrA gene; the 2 termini fold to resemble tRNA(Ala) and it encodes a 'tag peptide', a short internal open reading frame. During trans-translation Ala-aminoacylated tmRNA acts like a tRNA, entering the A-site of stalled ribosomes, displacing the stalled mRNA. The ribosome then switches to translate the ORF on the tmRNA; the nascent peptide is terminated with the 'tag peptide' encoded by the tmRNA and targeted for degradation. The ribosome is freed to recommence translation, which seems to be the essential function of trans-translation. This chain is SsrA-binding protein, found in Rhodopirellula baltica (strain DSM 10527 / NCIMB 13988 / SH1).